The primary structure comprises 486 residues: MTRIKLSYFTIGLVALLLALALWPNIPWRNGQEGQLDQIKARGELRVSTISSPLIYSTEKDTPSGFDYELAKRFADYLGVKLVIIPHHNIDDLFDALDNDDTDLLAAGLIYNRERLNRARTGPAYYSVSQQLVYRLGSPRPKSFSDLKGQVVVASGSAHMTTLKRLKQTKYPELNWSSSVDKSGKELLEQVAEGKLDYTLGDSATIALLQRIHPQLAVAFDVTDEEPVTWYFKQSDDDSLYAAMLDFYSEMVEDGSLARLEEKYLGHVGSFDYVDTKTFLSAIDNVLPSYQHLFEKHAGDIDWKLLAVIAYQESHWNPQATSPTGVRGLMMLTRATADGLGVKDRVDPEESIRGGAIYLQRLMKKLPETIPEDERIWFALAAYNLGYGHMLDARRLTKNQNGNPDSWVDVKMRLPMLSQKRYYPSTTYGYARGHEAYNYVENIRRYQVSLVGYLQEKEKKAAQHAAIEAELGKSNPVVGPGWSIGD.

The signal sequence occupies residues 1 to 21 (MTRIKLSYFTIGLVALLLALA). Residues 22-268 (LWPNIPWRNG…RLEEKYLGHV (247 aa)) are non-LT domain. The LT domain stretch occupies residues 269-486 (GSFDYVDTKT…VVGPGWSIGD (218 aa)). The active site involves E313.

This sequence in the N-terminal section; belongs to the bacterial solute-binding protein 3 family. The protein in the C-terminal section; belongs to the transglycosylase Slt family.

The protein resides in the cell outer membrane. The catalysed reaction is Exolytic cleavage of the (1-&gt;4)-beta-glycosidic linkage between N-acetylmuramic acid (MurNAc) and N-acetylglucosamine (GlcNAc) residues in peptidoglycan, from either the reducing or the non-reducing ends of the peptidoglycan chains, with concomitant formation of a 1,6-anhydrobond in the MurNAc residue.. Functionally, murein-degrading enzyme that degrades murein glycan strands and insoluble, high-molecular weight murein sacculi, with the concomitant formation of a 1,6-anhydromuramoyl product. Lytic transglycosylases (LTs) play an integral role in the metabolism of the peptidoglycan (PG) sacculus. Their lytic action creates space within the PG sacculus to allow for its expansion as well as for the insertion of various structures such as secretion systems and flagella. The protein is Membrane-bound lytic murein transglycosylase F of Yersinia pestis bv. Antiqua (strain Antiqua).